Consider the following 84-residue polypeptide: Small ribosomal subunit protein bS16c (84 aa).

It belongs to the bacterial ribosomal protein bS16 family.

It is found in the plastid. It localises to the chloroplast. This is Small ribosomal subunit protein bS16c from Anthoceros angustus (Hornwort).